Here is a 281-residue protein sequence, read N- to C-terminus: Phosphatidylglycerol--prolipoprotein diacylglyceryl transferase (281 aa).

Transmembrane regions (helical) follow at residues 23–43 (VGPLAVHWYGLGYVVGILFAW), 71–91 (FVIWAALGVVLGGRIGYVLFY), 107–127 (WDGGMSFHGGILGTTLAMILF), and 133–153 (ILVWSMFDTIAAGVPIGLGVV). Residue R154 participates in a 1,2-diacyl-sn-glycero-3-phospho-(1'-sn-glycerol) binding. Transmembrane regions (helical) follow at residues 189 to 209 (LYEAFLEGLVLFFVLFVLVWG), 217 to 237 (GFVAGAFVTGYGLSRIAVEFF), and 247 to 267 (LFGGWLTMGMVLSVPMVLLGL).

This sequence belongs to the Lgt family.

Its subcellular location is the cell inner membrane. The enzyme catalyses L-cysteinyl-[prolipoprotein] + a 1,2-diacyl-sn-glycero-3-phospho-(1'-sn-glycerol) = an S-1,2-diacyl-sn-glyceryl-L-cysteinyl-[prolipoprotein] + sn-glycerol 1-phosphate + H(+). It participates in protein modification; lipoprotein biosynthesis (diacylglyceryl transfer). Its function is as follows. Catalyzes the transfer of the diacylglyceryl group from phosphatidylglycerol to the sulfhydryl group of the N-terminal cysteine of a prolipoprotein, the first step in the formation of mature lipoproteins. This Brucella abortus (strain S19) protein is Phosphatidylglycerol--prolipoprotein diacylglyceryl transferase.